The sequence spans 472 residues: Flap endonuclease 1 (472 aa).

Positions 1–106 are N-domain; it reads MGIKGLARFL…EELMKRKERR (106 aa). Mg(2+) is bound at residue Asp34. Positions 47 and 72 each coordinate DNA. Mg(2+)-binding residues include Asp88, Glu160, Glu162, Asp181, and Asp183. The segment at 124-263 is I-domain; sequence TIRKQLIRTI…LTAYKLLKKH (140 aa). Glu160 lines the DNA pocket. The DNA site is built by Gly241 and Asp243. Asp243 is a Mg(2+) binding site. Residues 348-356 are interaction with PCNA; sequence AQTSLDSFF.

The protein belongs to the XPG/RAD2 endonuclease family. FEN1 subfamily. Interacts with PCNA. Three molecules of FEN1 bind to one PCNA trimer with each molecule binding to one PCNA monomer. PCNA stimulates the nuclease activity without altering cleavage specificity. Mg(2+) is required as a cofactor. Phosphorylated. Phosphorylation upon DNA damage induces relocalization to the nuclear plasma.

The protein localises to the nucleus. It localises to the nucleolus. Its subcellular location is the nucleoplasm. The protein resides in the mitochondrion. Its function is as follows. Structure-specific nuclease with 5'-flap endonuclease and 5'-3' exonuclease activities involved in DNA replication and repair. During DNA replication, cleaves the 5'-overhanging flap structure that is generated by displacement synthesis when DNA polymerase encounters the 5'-end of a downstream Okazaki fragment. It enters the flap from the 5'-end and then tracks to cleave the flap base, leaving a nick for ligation. Also involved in the long patch base excision repair (LP-BER) pathway, by cleaving within the apurinic/apyrimidinic (AP) site-terminated flap. Acts as a genome stabilization factor that prevents flaps from equilibrating into structures that lead to duplications and deletions. Also possesses 5'-3' exonuclease activity on nicked or gapped double-stranded DNA, and exhibits RNase H activity. Also involved in replication and repair of rDNA and in repairing mitochondrial DNA. The polypeptide is Flap endonuclease 1 (Cryptosporidium muris (strain RN66)).